Consider the following 128-residue polypeptide: UPF0325 protein PMI2289 (128 aa).

The protein belongs to the UPF0325 family.

The sequence is that of UPF0325 protein PMI2289 from Proteus mirabilis (strain HI4320).